The chain runs to 307 residues: Lipoyl synthase (307 aa).

Residues cysteine 55, cysteine 60, cysteine 66, cysteine 81, cysteine 85, cysteine 88, and serine 292 each contribute to the [4Fe-4S] cluster site. The Radical SAM core domain maps to 67–281 (WEDREATFLI…ARHAEELGFS (215 aa)).

Belongs to the radical SAM superfamily. Lipoyl synthase family. [4Fe-4S] cluster serves as cofactor.

It is found in the cytoplasm. It catalyses the reaction [[Fe-S] cluster scaffold protein carrying a second [4Fe-4S](2+) cluster] + N(6)-octanoyl-L-lysyl-[protein] + 2 oxidized [2Fe-2S]-[ferredoxin] + 2 S-adenosyl-L-methionine + 4 H(+) = [[Fe-S] cluster scaffold protein] + N(6)-[(R)-dihydrolipoyl]-L-lysyl-[protein] + 4 Fe(3+) + 2 hydrogen sulfide + 2 5'-deoxyadenosine + 2 L-methionine + 2 reduced [2Fe-2S]-[ferredoxin]. The protein operates within protein modification; protein lipoylation via endogenous pathway; protein N(6)-(lipoyl)lysine from octanoyl-[acyl-carrier-protein]: step 2/2. Catalyzes the radical-mediated insertion of two sulfur atoms into the C-6 and C-8 positions of the octanoyl moiety bound to the lipoyl domains of lipoate-dependent enzymes, thereby converting the octanoylated domains into lipoylated derivatives. This Mycobacterium avium (strain 104) protein is Lipoyl synthase.